A 519-amino-acid chain; its full sequence is Glycerophosphoinositol permease 1 (519 aa).

Residues 1 to 32 (MSDLVKSSEVIETTEVPPHNNNNNKRHFKYDS) are disordered. Residues 39–59 (LAGGVKLKDALMILCAGFALI) form a helical membrane-spanning segment. The N-linked (GlcNAc...) asparagine glycan is linked to asparagine 93. 3 consecutive transmembrane segments (helical) span residues 94-114 (ASLVGTIFGQVIIGLTADYIG), 117-137 (WSIVTATCFLIFGTMMCAASH), and 141-161 (VNGMFWMLTIFRGVTGFGIGA). An N-linked (GlcNAc...) asparagine glycan is attached at asparagine 175. The next 8 membrane-spanning stretches (helical) occupy residues 186–206 (ILATNLPLSFGGPFALCIFLI), 216–236 (DAIWRTMFAIGCFWPLSVFYF), 273–293 (VAWFLYDFVTFPNGIFSAGII), 313–333 (LLLGAIALPGVFVGAYVVDIL), 337–357 (YTMMIGFCGYIVFGLIVGCGY), 363–383 (ITGLFIVFYGLMMSCGNFGPG), 404–424 (GISAAIGKVGAVVGTKTFSPI), and 432–452 (WTFIIAAICGLAGVLVTFIFI). Over residues 487–500 (EEEDLEGSSEDSSD) the composition is skewed to acidic residues. Positions 487–519 (EEEDLEGSSEDSSDGEIVKNNTKNDVEKVDALK) are disordered. Asparagine 506 carries an N-linked (GlcNAc...) asparagine glycan. A compositionally biased stretch (basic and acidic residues) spans 508–519 (TKNDVEKVDALK).

The protein belongs to the major facilitator superfamily. Sugar transporter (TC 2.A.1.1) family.

It localises to the cell membrane. The catalysed reaction is sn-glycero-3-phospho-1D-myo-inositol(out) = sn-glycero-3-phospho-1D-myo-inositol(in). Glycerophosphodiester transporter that mediates uptake of glycerophosphoinositol (GroPIns) as a source of inositol and phosphate. Does not possess detectable glycerophosphocholine (GroPCho) transport activity. Although no glycerophosphoinositol transport activity occurs in the absence of GIT1, C.albicans is still able to use glycerophosphoinositol as a phosphate source at pH 7.5, albeit slowly. Thus, a second, GIT1-independent, mechanism must exist for utilizing glycerophosphoinositol as a phosphate source at physiological pH. The expanded ability to utilize GroPIns and GroPCho results from the organism's pathogenic nature and its need to occupy a variety of environments within its host organism. This possibility is buttressed by the fact that GroPIns and GroPCho are present and abundant in human fluids. This is Glycerophosphoinositol permease 1 from Candida albicans (strain SC5314 / ATCC MYA-2876) (Yeast).